A 155-amino-acid polypeptide reads, in one-letter code: Small ribosomal subunit protein uS7 (155 aa).

The protein belongs to the universal ribosomal protein uS7 family. As to quaternary structure, part of the 30S ribosomal subunit. Contacts proteins S9 and S11.

Its function is as follows. One of the primary rRNA binding proteins, it binds directly to 16S rRNA where it nucleates assembly of the head domain of the 30S subunit. Is located at the subunit interface close to the decoding center, probably blocks exit of the E-site tRNA. This is Small ribosomal subunit protein uS7 from Petrotoga mobilis (strain DSM 10674 / SJ95).